We begin with the raw amino-acid sequence, 208 residues long: Glutathione S-transferase P (208 aa).

A GST N-terminal domain is found at 1–78 (MTLKLTYFDI…HLARLNGLNG (78 aa)). Glutathione contacts are provided by residues Tyr-7, Trp-38, Lys-42, 49–50 (QV), and 62–63 (QS). The region spanning 80–202 (NETETTFIDM…NKRAAINPPV (123 aa)) is the GST C-terminal domain.

The protein belongs to the GST superfamily. Pi family. As to quaternary structure, homodimer. In terms of tissue distribution, expressed in dopaminergic (DA) neuron (at protein levels).

The enzyme catalyses RX + glutathione = an S-substituted glutathione + a halide anion + H(+). Conjugation of reduced glutathione to a wide number of exogenous and endogenous hydrophobic electrophiles. Prevents dopaminergic CEP neuron degeneration in response to Mn(2+). In Caenorhabditis elegans, this protein is Glutathione S-transferase P (gst-1).